The sequence spans 612 residues: Protein brambleberry (612 aa).

Residues 1-20 form the signal peptide; that stretch reads MALWFVLLWVSSLQYAEVEA. The next 2 membrane-spanning stretches (helical) occupy residues 364–384 and 417–437; these read LWTC…LSFL and LTLL…LLWA. Disordered stretches follow at residues 452–476 and 555–574; these read LSIY…PASS and NRSR…SFSG. Over residues 457 to 470 the composition is skewed to basic and acidic residues; that stretch reads PKEKTPEKQHEFGE. A compositionally biased stretch (low complexity) spans 556–574; sequence RSRSSSPNQSLASSSSFSG.

Its subcellular location is the nucleus membrane. Its function is as follows. Required for nuclear membrane fusion during karyogamy. The chain is Protein brambleberry (bmb) from Danio rerio (Zebrafish).